The sequence spans 178 residues: CASP-like protein 5A1 (178 aa).

Over residues 1–11 the composition is skewed to low complexity; it reads MFASRPAVHPV. Residues 1–25 form a disordered region; sequence MFASRPAVHPVEAPPPPDPAEQPRG. The Cytoplasmic portion of the chain corresponds to 1–37; sequence MFASRPAVHPVEAPPPPDPAEQPRGVLMKDLPGMPGT. A helical transmembrane segment spans residues 38–58; the sequence is AGGLGLRLAQFAFAAVALAVM. Residues 59 to 69 are Extracellular-facing; the sequence is ASTNDFPSVTS. The helical transmembrane segment at 70 to 90 threads the bilayer; the sequence is FCFLVAAAILQCLWSFSLAIV. Residues 91–105 lie on the Cytoplasmic side of the membrane; sequence DIYALLVKRCLRNRR. Residues 106–126 form a helical membrane-spanning segment; it reads AVCLFAIGDGITAALTFSAAC. Residues 127-152 lie on the Extracellular side of the membrane; the sequence is ASSGITVLIDNDLDLCSENHCASFES. Residues 153–173 form a helical membrane-spanning segment; the sequence is ATAMAFLSWFALSPSFLLNFW. Topologically, residues 174-178 are cytoplasmic; sequence SMASG.

This sequence belongs to the Casparian strip membrane proteins (CASP) family. As to quaternary structure, homodimer and heterodimers.

The protein localises to the cell membrane. The chain is CASP-like protein 5A1 from Oryza sativa subsp. japonica (Rice).